Reading from the N-terminus, the 260-residue chain is MMRIAVGLEYRGVGFCGWQSQPQACGVQDAVEKAVSAIAGEAITVTAAGRTDTGVHAALQIVHFDTTSVRPLTAWVRGVNSHLPAGVAVLWAREVDAEFHARFAAFERGYRYVLLNHPVRPGLNAGLVGWHHRPLDVACMNRAASPLIGRHDFSAFRAAECQARSPVKELRRALIERRGDYLLCDFRADGFLHHMVRNLMGCLVQIGAGGRPPEWLHEVLAGRDRTRAAPTFEAAGLYLTHIRYPARFALPESSERWPFA.

D52 functions as the Nucleophile in the catalytic mechanism. Residue Y110 participates in substrate binding.

Belongs to the tRNA pseudouridine synthase TruA family. As to quaternary structure, homodimer.

It catalyses the reaction uridine(38/39/40) in tRNA = pseudouridine(38/39/40) in tRNA. Formation of pseudouridine at positions 38, 39 and 40 in the anticodon stem and loop of transfer RNAs. This chain is tRNA pseudouridine synthase A, found in Thiobacillus denitrificans (strain ATCC 25259 / T1).